Here is a 1295-residue protein sequence, read N- to C-terminus: Phosphoribosylformylglycinamidine synthase (1295 aa).

The tract at residues 305 to 327 is disordered; it reads WPGAATGSGGEIRDEGATGRGAK. Residues 307 to 318, 386 to 388, and Ala-678 contribute to the ATP site; these read GAATGSGGEIRD and TGY. The Mg(2+) site is built by Asp-679, Glu-718, Asn-722, and Asp-884. An ATP-binding site is contributed by Ser-886. The 255-residue stretch at 1041 to 1295 folds into the Glutamine amidotransferase type-1 domain; sequence KVAVLREQGG…IFRNARKQLG (255 aa). The active-site Nucleophile is the Cys-1135. Catalysis depends on residues His-1260 and Glu-1262.

It in the N-terminal section; belongs to the FGAMS family. As to quaternary structure, monomer.

Its subcellular location is the cytoplasm. It catalyses the reaction N(2)-formyl-N(1)-(5-phospho-beta-D-ribosyl)glycinamide + L-glutamine + ATP + H2O = 2-formamido-N(1)-(5-O-phospho-beta-D-ribosyl)acetamidine + L-glutamate + ADP + phosphate + H(+). It functions in the pathway purine metabolism; IMP biosynthesis via de novo pathway; 5-amino-1-(5-phospho-D-ribosyl)imidazole from N(2)-formyl-N(1)-(5-phospho-D-ribosyl)glycinamide: step 1/2. In terms of biological role, phosphoribosylformylglycinamidine synthase involved in the purines biosynthetic pathway. Catalyzes the ATP-dependent conversion of formylglycinamide ribonucleotide (FGAR) and glutamine to yield formylglycinamidine ribonucleotide (FGAM) and glutamate. In Salmonella choleraesuis (strain SC-B67), this protein is Phosphoribosylformylglycinamidine synthase.